Here is a 198-residue protein sequence, read N- to C-terminus: Endonuclease V (198 aa).

Asp-38 and Asp-101 together coordinate Mg(2+).

It belongs to the endonuclease V family. Requires Mg(2+) as cofactor.

Its subcellular location is the cytoplasm. The catalysed reaction is Endonucleolytic cleavage at apurinic or apyrimidinic sites to products with a 5'-phosphate.. Its function is as follows. DNA repair enzyme involved in the repair of deaminated bases. Selectively cleaves double-stranded DNA at the second phosphodiester bond 3' to a deoxyinosine leaving behind the intact lesion on the nicked DNA. This Saccharolobus islandicus (strain M.16.4 / Kamchatka #3) (Sulfolobus islandicus) protein is Endonuclease V.